The sequence spans 457 residues: Guanine nucleotide-binding protein subunit alpha homolog (457 aa).

The G-alpha domain maps to 131 to 457 (RQVKLLLLGA…QRNLNALMLQ (327 aa)). A G1 motif region spans residues 134 to 147 (KLLLLGAGESGKST). GTP is bound by residues 139–146 (GAGESGKS), 274–280 (LHCRKAT), 299–303 (DVGGQ), 369–372 (NKTD), and Ala-429. Residues Ser-146 and Thr-280 each contribute to the Mg(2+) site. The G2 motif stretch occupies residues 272-280 (DILHCRKAT). Positions 295–304 (FVFVDVGGQR) are G3 motif. Positions 365 to 372 (ILFLNKTD) are G4 motif. Residues 427–432 (TTAIDT) are G5 motif.

Belongs to the G-alpha family. G(12) subfamily. G proteins are composed of 3 units; alpha, beta and gamma. The alpha chain contains the guanine nucleotide binding site. As to expression, in ovary, expressed in nurse cells and oocyte. In early embryos, distributed uniformly. At the extended germband stage, accumulates in the mesoderm.

It is found in the cytoplasm. Functionally, may play a role in a signal transduction pathway used during gastrulation. Required specifically for the ventral furrow and posterior midgut invaginations, where it is necessary for coordinating cell shape changes. Guanine nucleotide-binding proteins (G proteins) are involved as modulators or transducers in various transmembrane signaling systems. The polypeptide is Guanine nucleotide-binding protein subunit alpha homolog (cta) (Drosophila melanogaster (Fruit fly)).